Consider the following 228-residue polypeptide: 2-C-methyl-D-erythritol 4-phosphate cytidylyltransferase (228 aa).

Belongs to the IspD/TarI cytidylyltransferase family. IspD subfamily.

It carries out the reaction 2-C-methyl-D-erythritol 4-phosphate + CTP + H(+) = 4-CDP-2-C-methyl-D-erythritol + diphosphate. The protein operates within isoprenoid biosynthesis; isopentenyl diphosphate biosynthesis via DXP pathway; isopentenyl diphosphate from 1-deoxy-D-xylulose 5-phosphate: step 2/6. In terms of biological role, catalyzes the formation of 4-diphosphocytidyl-2-C-methyl-D-erythritol from CTP and 2-C-methyl-D-erythritol 4-phosphate (MEP). The protein is 2-C-methyl-D-erythritol 4-phosphate cytidylyltransferase of Actinobacillus pleuropneumoniae serotype 3 (strain JL03).